Consider the following 142-residue polypeptide: Immunoglobulin omega chain (142 aa).

The first 19 residues, 1–19 (MAWTSVLLMLLAHLTGCGP), serve as a signal peptide directing secretion. A framework-1 region spans residues 20 to 41 (QPMVHQPPSASSSLGATIRLSC). Residues C41 and C115 are joined by a disulfide bond. Positions 42 to 56 (TLSNDHNIGIYSIYW) are complementarity-determining-1. The interval 57 to 70 (YQQRPGHPPRFLLR) is framework-2. Residues 71–81 (YFSHSDKHQGP) are complementarity-determining-2. A framework-3 region spans residues 82-115 (DIPPRFSGSKDTARNLGYLSISELQPEDEAVYYC).

The protein belongs to the immunoglobulin superfamily. In terms of tissue distribution, only expressed by pre-B-cells.

Functionally, associates with the Ig-mu chain to form a molecular complex that is expressed on the surface of pre-B-cells. This complex presumably regulates Ig gene rearrangements in the early steps of B-cell differentiation. The sequence is that of Immunoglobulin omega chain from Mus musculus (Mouse).